The primary structure comprises 343 residues: Holliday junction branch migration complex subunit RuvB (343 aa).

The interval 1–181 is large ATPase domain (RuvB-L); it reads MDRIIDSAAT…FGIVQRLEFY (181 aa). ATP is bound by residues Ile-20, Arg-21, Gly-62, Lys-65, Thr-66, Thr-67, 128–130, Arg-171, Tyr-181, and Arg-218; that span reads EDF. Residue Thr-66 participates in Mg(2+) binding. The tract at residues 182-252 is small ATPAse domain (RuvB-S); sequence SPEDLARIVR…VAQAAMQMLK (71 aa). Residues 255 to 343 are head domain (RuvB-H); that stretch reads QGGFDELDRR…SAFTDPEDLF (89 aa). Residues Arg-291, Arg-310, and Arg-315 each contribute to the DNA site.

The protein belongs to the RuvB family. As to quaternary structure, homohexamer. Forms an RuvA(8)-RuvB(12)-Holliday junction (HJ) complex. HJ DNA is sandwiched between 2 RuvA tetramers; dsDNA enters through RuvA and exits via RuvB. An RuvB hexamer assembles on each DNA strand where it exits the tetramer. Each RuvB hexamer is contacted by two RuvA subunits (via domain III) on 2 adjacent RuvB subunits; this complex drives branch migration. In the full resolvosome a probable DNA-RuvA(4)-RuvB(12)-RuvC(2) complex forms which resolves the HJ.

The protein localises to the cytoplasm. It catalyses the reaction ATP + H2O = ADP + phosphate + H(+). The RuvA-RuvB-RuvC complex processes Holliday junction (HJ) DNA during genetic recombination and DNA repair, while the RuvA-RuvB complex plays an important role in the rescue of blocked DNA replication forks via replication fork reversal (RFR). RuvA specifically binds to HJ cruciform DNA, conferring on it an open structure. The RuvB hexamer acts as an ATP-dependent pump, pulling dsDNA into and through the RuvAB complex. RuvB forms 2 homohexamers on either side of HJ DNA bound by 1 or 2 RuvA tetramers; 4 subunits per hexamer contact DNA at a time. Coordinated motions by a converter formed by DNA-disengaged RuvB subunits stimulates ATP hydrolysis and nucleotide exchange. Immobilization of the converter enables RuvB to convert the ATP-contained energy into a lever motion, pulling 2 nucleotides of DNA out of the RuvA tetramer per ATP hydrolyzed, thus driving DNA branch migration. The RuvB motors rotate together with the DNA substrate, which together with the progressing nucleotide cycle form the mechanistic basis for DNA recombination by continuous HJ branch migration. Branch migration allows RuvC to scan DNA until it finds its consensus sequence, where it cleaves and resolves cruciform DNA. This chain is Holliday junction branch migration complex subunit RuvB, found in Xylella fastidiosa (strain Temecula1 / ATCC 700964).